Reading from the N-terminus, the 337-residue chain is Cytoskeleton protein RodZ (337 aa).

The Cytoplasmic segment spans residues 1–111 (MNTEATHDQN…LGKRRKKRDG (111 aa)). The HTH cro/C1-type domain maps to 19-71 (LRNAREQLGLSQQAVAERLCLKVSTVRDIEEDKAPADLASTFLRGYIRSYARL). The segment at residues 30-49 (QQAVAERLCLKVSTVRDIEE) is a DNA-binding region (H-T-H motif). A helical; Signal-anchor for type II membrane protein transmembrane segment spans residues 112-132 (WLMTFTWLVLFVVIGLSGAWW). Residues 133-337 (WQDHKAQQEE…TLNAEQSPAQ (205 aa)) are Periplasmic-facing. Residues 145–167 (TMADQSSAELSSNSEQGQSVPLN) are compositionally biased toward polar residues. Residues 145–218 (TMADQSSAEL…AVVSPSQANV (74 aa)) form a disordered region. Positions 168-207 (TSTTTDPATTSTPPASVDTTATNTQTPAVTAPAPAVDPQQ) are enriched in low complexity. Residues 208-218 (NAVVSPSQANV) show a composition bias toward polar residues.

The protein belongs to the RodZ family.

It localises to the cell inner membrane. Cytoskeletal protein that is involved in cell-shape control through regulation of the length of the long axis. This chain is Cytoskeleton protein RodZ, found in Shigella dysenteriae serotype 1 (strain Sd197).